Consider the following 811-residue polypeptide: Serine/threonine-protein kinase prpf4B (811 aa).

4 disordered regions span residues 1-257 (MVIE…TNEP), 288-341 (EKYN…NQIE), 353-379 (KDQNSENSSAFNDNNNDESCSSEEDLK), and 408-452 (VSIK…TNGG). Residues 46 to 71 (SSPASRETSSSKLMSPSKNQSSSSSR) are compositionally biased toward low complexity. Positions 81–202 (RRKDERYSSS…DNMDSRDNKN (122 aa)) are enriched in basic and acidic residues. The segment covering 203–215 (GSRQSINNNTLSY) has biased composition (polar residues). The segment covering 217–240 (KQADRKDEVRVKDNISVNDDKTNH) has biased composition (basic and acidic residues). Polar residues-rich tracts occupy residues 241–257 (GENLTNESITATSTNEP) and 293–302 (EQPQPITSSL). Over residues 310–327 (SNTNTNSNSTPVATTTTS) the composition is skewed to low complexity. The region spanning 490–808 (YQIFSPIGSG…PFEALNHEFL (319 aa)) is the Protein kinase domain. Residues 496–504 (IGSGVFSTV) and lysine 519 contribute to the ATP site. The Proton acceptor role is filled by aspartate 619.

Belongs to the protein kinase superfamily. CMGC Ser/Thr protein kinase family. In terms of processing, phosphorylated. Autophosphorylated; phosphorylation inhibits interaction with its targets.

The protein localises to the nucleus. It is found in the chromosome. Its subcellular location is the centromere. It localises to the kinetochore. The catalysed reaction is L-seryl-[protein] + ATP = O-phospho-L-seryl-[protein] + ADP + H(+). The enzyme catalyses L-threonyl-[protein] + ATP = O-phospho-L-threonyl-[protein] + ADP + H(+). Functionally, serine/threonine kinase involved in spliceosomal assembly as well as mitosis and signaling regulation. This Dictyostelium discoideum (Social amoeba) protein is Serine/threonine-protein kinase prpf4B (prp4k).